Reading from the N-terminus, the 119-residue chain is Protein TusC (119 aa).

This sequence belongs to the DsrF/TusC family. As to quaternary structure, heterohexamer, formed by a dimer of trimers. The hexameric TusBCD complex contains 2 copies each of TusB, TusC and TusD. The TusBCD complex interacts with TusE.

Its subcellular location is the cytoplasm. Part of a sulfur-relay system required for 2-thiolation of 5-methylaminomethyl-2-thiouridine (mnm(5)s(2)U) at tRNA wobble positions. This chain is Protein TusC, found in Shigella flexneri serotype 5b (strain 8401).